A 92-amino-acid polypeptide reads, in one-letter code: Small nuclear ribonucleoprotein E (92 aa).

The 75-residue stretch at 18-92 (INLIFRYLQN…NITLLQSVSN (75 aa)) folds into the Sm domain.

The protein belongs to the snRNP Sm proteins family. As to quaternary structure, core component of the spliceosomal U1, U2, U4 and U5 small nuclear ribonucleoproteins (snRNPs), the building blocks of the spliceosome. Most spliceosomal snRNPs contain a common set of Sm proteins, SNRPB, SNRPD1, SNRPD2, SNRPD3, SNRPE, SNRPF and SNRPG that assemble in a heptameric protein ring on the Sm site of the small nuclear RNA to form the core snRNP. Component of the U1 snRNP. The U1 snRNP is composed of the U1 snRNA and the 7 core Sm proteins SNRPB, SNRPD1, SNRPD2, SNRPD3, SNRPE, SNRPF and SNRPG, and at least three U1 snRNP-specific proteins SNRNP70/U1-70K, SNRPA/U1-A and SNRPC/U1-C. Component of the U4/U6-U5 tri-snRNP complex composed of the U4, U6 and U5 snRNAs and at least PRPF3, PRPF4, PRPF6, PRPF8, PRPF31, SNRNP200, TXNL4A, SNRNP40, SNRPB, SNRPD1, SNRPD2, SNRPD3, SNRPE, SNRPF, SNRPG, DDX23, CD2BP2, PPIH, SNU13, EFTUD2, SART1 and USP39, plus LSM2, LSM3, LSM4, LSM5, LSM6, LSM7 and LSM8. Component of the U7 snRNP complex, or U7 Sm protein core complex, that is composed of the U7 snRNA and at least LSM10, LSM11, SNRPB, SNRPD3, SNRPE, SNRPF and SNRPG; the complex does not contain SNRPD1 and SNRPD2. Component of the minor spliceosome, which splices U12-type introns. Part of the SMN-Sm complex that contains SMN1, GEMIN2/SIP1, DDX20/GEMIN3, GEMIN4, GEMIN5, GEMIN6, GEMIN7, GEMIN8, STRAP/UNRIP and the Sm proteins SNRPB, SNRPD1, SNRPD2, SNRPD3, SNRPE, SNRPF and SNRPG; catalyzes core snRNPs assembly. Forms a 6S pICln-Sm complex composed of CLNS1A/pICln, SNRPD1, SNRPD2, SNRPE, SNRPF and SNRPG; ring-like structure where CLNS1A/pICln mimics additional Sm proteins and which is unable to assemble into the core snRNP. Interacts with SMN1; the interaction is direct. Interacts with GEMIN2 (via N-terminus); the interaction is direct. Interacts with SNRPF; the interaction is direct. Interacts with SNRPG; the interaction is direct.

Its subcellular location is the cytoplasm. It localises to the cytosol. The protein localises to the nucleus. Functionally, plays a role in pre-mRNA splicing as a core component of the spliceosomal U1, U2, U4 and U5 small nuclear ribonucleoproteins (snRNPs), the building blocks of the spliceosome. Component of both the pre-catalytic spliceosome B complex and activated spliceosome C complexes. As a component of the minor spliceosome, involved in the splicing of U12-type introns in pre-mRNAs. As part of the U7 snRNP it is involved in histone 3'-end processing. This chain is Small nuclear ribonucleoprotein E (SNRPE), found in Sus scrofa (Pig).